Reading from the N-terminus, the 346-residue chain is NADH-ubiquinone oxidoreductase chain 2 (346 aa).

Helical transmembrane passes span 25-45, 52-72, 95-115, 124-144, 149-169, 178-198, 200-220, 242-262, 274-294, and 326-346; these read HWILAWTGLEINTLAIIPLIS, AIEATIKYFLTQSTASALILF, CLMLTMAIAIKLGLVPFHFWF, LITALLLSTLMKLPPITLLLL, LNTTLLTLLAISSTLIGGWMG, ILAFSSISHLGWMIMIISYNP, LTILTFILYTIMTSTVFLSLA, ATVMLTLLSLAGLPPLTGFMP, EMTPMATIITMLSLLSLFFYL, and AILTALSTTLLPLSPLIITML.

Belongs to the complex I subunit 2 family. In terms of assembly, core subunit of respiratory chain NADH dehydrogenase (Complex I) which is composed of 45 different subunits.

It localises to the mitochondrion inner membrane. It catalyses the reaction a ubiquinone + NADH + 5 H(+)(in) = a ubiquinol + NAD(+) + 4 H(+)(out). In terms of biological role, core subunit of the mitochondrial membrane respiratory chain NADH dehydrogenase (Complex I) which catalyzes electron transfer from NADH through the respiratory chain, using ubiquinone as an electron acceptor. Essential for the catalytic activity and assembly of complex I. The chain is NADH-ubiquinone oxidoreductase chain 2 (MT-ND2) from Gallus gallus (Chicken).